The following is a 252-amino-acid chain: Phosphoglycolate phosphatase (252 aa).

Residue D13 is the Nucleophile of the active site. D13, D15, and D192 together coordinate Mg(2+).

It belongs to the HAD-like hydrolase superfamily. CbbY/CbbZ/Gph/YieH family. Monomer. Requires Mg(2+) as cofactor. Chloride serves as cofactor.

It carries out the reaction 2-phosphoglycolate + H2O = glycolate + phosphate. It participates in organic acid metabolism; glycolate biosynthesis; glycolate from 2-phosphoglycolate: step 1/1. Its function is as follows. Specifically catalyzes the dephosphorylation of 2-phosphoglycolate. Is involved in the dissimilation of the intracellular 2-phosphoglycolate formed during the DNA repair of 3'-phosphoglycolate ends, a major class of DNA lesions induced by oxidative stress. The polypeptide is Phosphoglycolate phosphatase (Salmonella choleraesuis (strain SC-B67)).